The sequence spans 177 residues: Large ribosomal subunit protein uL6 (177 aa).

The protein belongs to the universal ribosomal protein uL6 family. In terms of assembly, part of the 50S ribosomal subunit.

Its function is as follows. This protein binds to the 23S rRNA, and is important in its secondary structure. It is located near the subunit interface in the base of the L7/L12 stalk, and near the tRNA binding site of the peptidyltransferase center. The polypeptide is Large ribosomal subunit protein uL6 (Erwinia tasmaniensis (strain DSM 17950 / CFBP 7177 / CIP 109463 / NCPPB 4357 / Et1/99)).